A 68-amino-acid polypeptide reads, in one-letter code: MAKGKDVRIPVLLECTACVRNGVNVNKASTGISRYITQKNRHNTPNRLELRKFCPYCYKHTIHGEVKK.

The protein belongs to the bacterial ribosomal protein bL33 family.

The protein localises to the plastid. It is found in the chloroplast. The chain is Large ribosomal subunit protein bL33c from Lactuca sativa (Garden lettuce).